The primary structure comprises 537 residues: MAKAATSKKEASKVEAKKPAARLGAKKTVSKSEESVKTSQSVKNSPSRTGSSSPQKGGKKGAVGEIKQVIGAIVDVQFEGALPNILNALETDRLGSRLILEVAQHLGENTVRTIAMDTTDGLVRGQKVFDTGTQICVPVGEATLGRIMNVIGEPVDEVGPIVTTKTRSIHQKAPEYIEQSTESEILVTGIKVVDLLAPYSKGGKVGLFGGAGVGKTVLIMELINNIAKAHGGYSVFAGVGERTREGNDLYYEMIESRVNVNPKENDGSTKGSKCALVYGQMNEPPGARARVALSGLTIAENFRDEGQDVLFFVDNIFRFTQAGSEVSALLGRIPSAVGYQPTLATDMGALQERITSTKTGSITSVQAIYVPADDLTDPAPATSFAHLDATTVLSRSIAEKGIYPAVDPLDSFSRMLDPLVVGEEHYAVACQVQTILQRYKALQDIIAILGMDELSEEDKLLVGRARRIERFLSQPFHVAEAFTGSPGKLVSLEDTIKGFKGLCAGDYDDLPEAAFYMVGSIDEAIEKGKRLMAEASS.

A disordered region spans residues 1-61 (MAKAATSKKE…SSPQKGGKKG (61 aa)). Over residues 7-18 (SKKEASKVEAKK) the composition is skewed to basic and acidic residues. Polar residues predominate over residues 44–55 (NSPSRTGSSSPQ). ATP is bound at residue 209-216 (GGAGVGKT).

This sequence belongs to the ATPase alpha/beta chains family. As to quaternary structure, F-type ATPases have 2 components, CF(1) - the catalytic core - and CF(0) - the membrane proton channel. CF(1) has five subunits: alpha(3), beta(3), gamma(1), delta(1), epsilon(1). CF(0) has three main subunits: a(1), b(2) and c(9-12). The alpha and beta chains form an alternating ring which encloses part of the gamma chain. CF(1) is attached to CF(0) by a central stalk formed by the gamma and epsilon chains, while a peripheral stalk is formed by the delta and b chains.

It is found in the cell inner membrane. It catalyses the reaction ATP + H2O + 4 H(+)(in) = ADP + phosphate + 5 H(+)(out). In terms of biological role, produces ATP from ADP in the presence of a proton gradient across the membrane. The catalytic sites are hosted primarily by the beta subunits. This chain is ATP synthase subunit beta, found in Bartonella bacilliformis (strain ATCC 35685 / KC583 / Herrer 020/F12,63).